A 4592-amino-acid chain; its full sequence is Intermembrane lipid transfer protein vps13D (4592 aa).

One can recognise a Chorein N-terminal domain in the interval 3-102 (FESVVAEVID…SSTNVSSNYS (100 aa)). Disordered stretches follow at residues 95 to 142 (TNVS…TASQ), 157 to 199 (LDKK…IDSQ), 286 to 307 (STTSSNNNNNNNNNNTTSSSSS), 445 to 529 (KKDD…IKGI), 574 to 605 (SNSTTTNNSNNNSSSSPNILATSPSNNSLSPM), 826 to 861 (NYNNQSSSSSSSSQPPPPKPTEETSTTNKPKKQQGI), 1040 to 1083 (TTSP…KRQW), 1219 to 1249 (YFKNKRKEENEQNEGNTEDDEQEEEEQEKKP), 1655 to 1717 (QQQE…QQSN), 1855 to 1886 (SNNNNDNNNDNNNSNNSNNNNNTSNGSGNSLF), 1971 to 2001 (TSSLDNTSISTTTTTTTTTTTTTTTTTTTTS), 2025 to 2056 (PLINDNSNKSPTSKSSSSKSSSSKSSKKEQQQ), and 2245 to 2270 (NNNNNNNNNNNNNNNNNNNNNTNIIN). Low complexity-rich tracts occupy residues 117 to 139 (SSSNNNNNNNNDSSSSSSNTTST) and 172 to 199 (KSTNTTTNNNGINNSNDKNKNNNNIDSQ). A coiled-coil region spans residues 437–517 (KNATIKLNKK…KKKEEKGKSK (81 aa)). The segment covering 445-457 (KKDDKKDDKKDDI) has biased composition (basic and acidic residues). The segment covering 458–474 (NSSSSSIGSSNSSNNTP) has biased composition (low complexity). The span at 475 to 529 (TKDKNKEKEKDKEKEKEKEKKKEKEKLKLEEKKKKKEEKGKSKSKDSKKNKIKGI) shows a compositional bias: basic and acidic residues. Positions 574–591 (SNSTTTNNSNNNSSSSPN) are enriched in low complexity. The segment covering 592 to 603 (ILATSPSNNSLS) has biased composition (polar residues). Residues 829 to 838 (NQSSSSSSSS) show a composition bias toward low complexity. Polar residues predominate over residues 1040-1059 (TTSPTFNSLNNKPSTLQNNH). Low complexity predominate over residues 1064-1076 (NGNSSNNNNTDSP). Acidic residues predominate over residues 1234–1244 (NTEDDEQEEEE). Composition is skewed to low complexity over residues 1669-1689 (KSINSKPPSPKLSLMSPLRKS) and 1702-1715 (QQQQQQQQQQQQQQ). Positions 2037 to 2048 (SKSSSSKSSSSK) are enriched in low complexity. The stretch at 2321-2354 (TLQINDLGANIISIGNKSTSIKCFLRSIRLSDSR) is one TPR 1 repeat. 7 disordered regions span residues 2456–2489 (KTNNNNNNNNNNYNNTNSNNNNNQEEEEKDSIST), 2862–2882 (AVSTSNNPNGSGYNNSNNNNG), 3006–3035 (GEQKGKKKSTSTSTSPTLSSQPSSSSSSSS), 3106–3129 (NSSGYNSSSPSPSSSSSPSSSSSN), 3356–3384 (KLPTSPQTSSSSSPPPATTTTSTTTKRTT), 3560–3580 (NSLKIEQGRKSKKQQQQHRHN), and 3630–3679 (STNH…SKLK). Composition is skewed to low complexity over residues 2458-2478 (NNNNNNNNNNYNNTNSNNNNN), 2864-2880 (STSNNPNGSGYNNSNNN), and 3015-3035 (TSTSTSPTLSSQPSSSSSSSS). Positions 3358–3384 (PTSPQTSSSSSPPPATTTTSTTTKRTT) are enriched in low complexity. Basic residues predominate over residues 3569 to 3580 (KSKKQQQQHRHN). Positions 3640–3679 (SSTFNNSSNDNINNGNSNNNTSNSLSPPSSSSSINLSKLK) are enriched in low complexity. One copy of the TPR 2 repeat lies at 3789–3822 (EVPKPYLGRVDIKDNDTHTSIHFYDQDTEYSPFR). Low complexity-rich tracts occupy residues 3872–3894 (TTTTTTTTNSTNDINNDNNNNNN) and 4111–4135 (QQLQQNPQQQQPQQQNNEIQNNPIN). Disordered stretches follow at residues 3872-3897 (TTTTTTTTNSTNDINNDNNNNNNQYI) and 4105-4135 (KKHKKNQQLQQNPQQQQPQQQNNEIQNNPIN).

The protein localises to the membrane. Its function is as follows. Mediates the transfer of lipids between membranes at organelle contact sites. The sequence is that of Intermembrane lipid transfer protein vps13D (vps13D) from Dictyostelium discoideum (Social amoeba).